Consider the following 278-residue polypeptide: Large ribosomal subunit protein uL2 (278 aa).

2 disordered regions span residues 33 to 53 and 219 to 278; these read LTEG…TSRG and LTRG…KKKR. The span at 269–278 shows a compositional bias: basic residues; it reads IRSRHAKKKR.

Belongs to the universal ribosomal protein uL2 family. Part of the 50S ribosomal subunit. Forms a bridge to the 30S subunit in the 70S ribosome.

Functionally, one of the primary rRNA binding proteins. Required for association of the 30S and 50S subunits to form the 70S ribosome, for tRNA binding and peptide bond formation. It has been suggested to have peptidyltransferase activity; this is somewhat controversial. Makes several contacts with the 16S rRNA in the 70S ribosome. The protein is Large ribosomal subunit protein uL2 of Sphingopyxis alaskensis (strain DSM 13593 / LMG 18877 / RB2256) (Sphingomonas alaskensis).